Here is a 586-residue protein sequence, read N- to C-terminus: Laccase-9 (586 aa).

An N-terminal signal peptide occupies residues 1 to 25 (MPRVHHSLSNQAFLVLLLFSSIASA). Plastocyanin-like domains follow at residues 33–149 (HVKD…PRSG) and 159–307 (KEVP…YEGA). N52, N74, and N79 each carry an N-linked (GlcNAc...) asparagine glycan. Cu cation contacts are provided by H83 and H85. A glycan (N-linked (GlcNAc...) asparagine) is linked at N111. Residues H128 and H130 each coordinate Cu cation. Residues N236, N333, N385, N403, and N451 are each glycosylated (N-linked (GlcNAc...) asparagine). The region spanning 411–552 (DFPDQPPLKF…MMAFIVQNGP (142 aa)) is the Plastocyanin-like 3 domain. Cu cation is bound by residues H469, H472, H474, H531, C532, H533, and H537.

Belongs to the multicopper oxidase family. Requires Cu cation as cofactor. As to expression, predominantly expressed in roots.

It is found in the secreted. The protein resides in the extracellular space. It localises to the apoplast. It catalyses the reaction 4 hydroquinone + O2 = 4 benzosemiquinone + 2 H2O. Functionally, lignin degradation and detoxification of lignin-derived products. The sequence is that of Laccase-9 (LAC9) from Arabidopsis thaliana (Mouse-ear cress).